The chain runs to 34 residues: MAFNIHNRNLLSLEHHTNRELRYLLDLTRDLKAK.

The protein belongs to the aspartate/ornithine carbamoyltransferase superfamily. OTCase family. In terms of assembly, probably nonameric or dodecameric.

Its subcellular location is the cytoplasm. The catalysed reaction is carbamoyl phosphate + L-ornithine = L-citrulline + phosphate + H(+). The protein operates within amino-acid degradation; L-arginine degradation via ADI pathway; carbamoyl phosphate from L-arginine: step 2/2. The protein is Ornithine carbamoyltransferase, catabolic (arcB) of Pseudomonas putida (Arthrobacter siderocapsulatus).